We begin with the raw amino-acid sequence, 88 residues long: Small ribosomal subunit protein uS15c (88 aa).

The protein belongs to the universal ribosomal protein uS15 family. Part of the 30S ribosomal subunit.

It localises to the plastid. It is found in the chloroplast. The protein is Small ribosomal subunit protein uS15c (rps15) of Draba nemorosa (Woodland whitlowgrass).